Consider the following 362-residue polypeptide: Forkhead box protein F (362 aa).

The interval 19 to 70 (LDSTAPNNSHRTIKAENYFNEDEEDYNENSHEDSEDSKEDSDGQGCRSRKRK) is disordered. The segment covering 37-57 (FNEDEEDYNENSHEDSEDSKE) has biased composition (acidic residues). The segment at residues 72–169 (KPPFSYIALI…EENGFRRRPR (98 aa)) is a DNA-binding region (fork-head).

Its subcellular location is the nucleus. In terms of biological role, transcription factor that is required for cell fate of coelomocytes which are non-muscle mesodermal cells. Acts in concert with, and by activating expression of, the homeodomain gene ceh-34. Binds to the sequence motif 5'-ATAAA[T/C]A-3'. The sequence is that of Forkhead box protein F from Caenorhabditis elegans.